Here is a 651-residue protein sequence, read N- to C-terminus: LEAF RUST 10 DISEASE-RESISTANCE LOCUS RECEPTOR-LIKE PROTEIN KINASE-like 1.2 (651 aa).

Positions 1–26 are cleaved as a signal peptide; the sequence is MNPSTPSLLYTSIFFYFTIIATQTLS. Over 27–264 the chain is Extracellular; sequence LDPKFKACEP…NDKRRRVIVK (238 aa). N88, N114, N130, N136, N155, N193, and N213 each carry an N-linked (GlcNAc...) asparagine glycan. A helical membrane pass occupies residues 265 to 285; the sequence is VLIGASAAVVGLIAASIFWYV. At 286–651 the chain is on the cytoplasmic side; that stretch reads YHRRKTKSYR…DSVIVKWDSK (366 aa). The Protein kinase domain occupies 341 to 613; it reads FDPSKELGDG…PCMSHVQDTL (273 aa). ATP-binding positions include 347–355 and K369; that span reads LGDGGFGTV. Position 415 is a phosphotyrosine (Y415). D465 functions as the Proton acceptor in the catalytic mechanism. S498 is subject to Phosphoserine. 2 positions are modified to phosphothreonine: T499 and T504. Position 512 is a phosphotyrosine (Y512).

Belongs to the protein kinase superfamily. Ser/Thr protein kinase family.

It is found in the cell membrane. It localises to the membrane. The catalysed reaction is L-seryl-[protein] + ATP = O-phospho-L-seryl-[protein] + ADP + H(+). It carries out the reaction L-threonyl-[protein] + ATP = O-phospho-L-threonyl-[protein] + ADP + H(+). Its function is as follows. Probable receptor-like serine/threonine-protein kinase involved in abscisic acid (ABA) signaling. Acts as a positive regulator of abiotic stress response. This chain is LEAF RUST 10 DISEASE-RESISTANCE LOCUS RECEPTOR-LIKE PROTEIN KINASE-like 1.2, found in Arabidopsis thaliana (Mouse-ear cress).